Reading from the N-terminus, the 299-residue chain is tRNA dimethylallyltransferase (299 aa).

Position 13-20 (13-20 (GATASGKT)) interacts with ATP. Substrate is bound at residue 15-20 (TASGKT). Residues 38–41 (DSRQ) form an interaction with substrate tRNA region.

The protein belongs to the IPP transferase family. Monomer. It depends on Mg(2+) as a cofactor.

It catalyses the reaction adenosine(37) in tRNA + dimethylallyl diphosphate = N(6)-dimethylallyladenosine(37) in tRNA + diphosphate. Its function is as follows. Catalyzes the transfer of a dimethylallyl group onto the adenine at position 37 in tRNAs that read codons beginning with uridine, leading to the formation of N6-(dimethylallyl)adenosine (i(6)A). The polypeptide is tRNA dimethylallyltransferase (Prochlorococcus marinus (strain MIT 9312)).